The primary structure comprises 100 residues: Urease subunit gamma (100 aa).

This sequence belongs to the urease gamma subunit family. In terms of assembly, heterotrimer of UreA (gamma), UreB (beta) and UreC (alpha) subunits. Three heterotrimers associate to form the active enzyme.

It localises to the cytoplasm. The catalysed reaction is urea + 2 H2O + H(+) = hydrogencarbonate + 2 NH4(+). It functions in the pathway nitrogen metabolism; urea degradation; CO(2) and NH(3) from urea (urease route): step 1/1. This is Urease subunit gamma from Mycobacteroides abscessus (strain ATCC 19977 / DSM 44196 / CCUG 20993 / CIP 104536 / JCM 13569 / NCTC 13031 / TMC 1543 / L948) (Mycobacterium abscessus).